Here is a 399-residue protein sequence, read N- to C-terminus: 1-deoxy-D-xylulose 5-phosphate reductoisomerase (399 aa).

NADPH-binding residues include T16, G17, S18, I19, G42, R43, N44, and N127. K128 is a 1-deoxy-D-xylulose 5-phosphate binding site. E129 is an NADPH binding site. D153 contacts Mn(2+). 1-deoxy-D-xylulose 5-phosphate-binding residues include S154, E155, S179, and H202. Residue E155 coordinates Mn(2+). NADPH is bound at residue G208. Residues S215, N220, K221, and E224 each contribute to the 1-deoxy-D-xylulose 5-phosphate site. Residue E224 coordinates Mn(2+).

Belongs to the DXR family. The cofactor is Mg(2+). It depends on Mn(2+) as a cofactor.

It carries out the reaction 2-C-methyl-D-erythritol 4-phosphate + NADP(+) = 1-deoxy-D-xylulose 5-phosphate + NADPH + H(+). The protein operates within isoprenoid biosynthesis; isopentenyl diphosphate biosynthesis via DXP pathway; isopentenyl diphosphate from 1-deoxy-D-xylulose 5-phosphate: step 1/6. Catalyzes the NADPH-dependent rearrangement and reduction of 1-deoxy-D-xylulose-5-phosphate (DXP) to 2-C-methyl-D-erythritol 4-phosphate (MEP). The chain is 1-deoxy-D-xylulose 5-phosphate reductoisomerase from Caulobacter vibrioides (strain NA1000 / CB15N) (Caulobacter crescentus).